A 365-amino-acid polypeptide reads, in one-letter code: Phosphoserine aminotransferase (365 aa).

R40 is a binding site for L-glutamate. Residues 74-75 (AS), F99, T155, D177, and Q200 each bind pyridoxal 5'-phosphate. N6-(pyridoxal phosphate)lysine is present on K201. 241-242 (NT) provides a ligand contact to pyridoxal 5'-phosphate.

The protein belongs to the class-V pyridoxal-phosphate-dependent aminotransferase family. SerC subfamily. Homodimer. Pyridoxal 5'-phosphate serves as cofactor.

The protein localises to the cytoplasm. It carries out the reaction O-phospho-L-serine + 2-oxoglutarate = 3-phosphooxypyruvate + L-glutamate. It catalyses the reaction 4-(phosphooxy)-L-threonine + 2-oxoglutarate = (R)-3-hydroxy-2-oxo-4-phosphooxybutanoate + L-glutamate. It participates in amino-acid biosynthesis; L-serine biosynthesis; L-serine from 3-phospho-D-glycerate: step 2/3. Its function is as follows. Catalyzes the reversible conversion of 3-phosphohydroxypyruvate to phosphoserine and of 3-hydroxy-2-oxo-4-phosphonooxybutanoate to phosphohydroxythreonine. The protein is Phosphoserine aminotransferase of Lactococcus lactis subsp. cremoris (strain SK11).